The chain runs to 120 residues: Acylphosphatase-1 (120 aa).

A2 carries the post-translational modification N-acetylalanine. The Acylphosphatase-like domain maps to 8-98; sequence SCEFEVFGRV…YGYANFHIKP (91 aa). Catalysis depends on residues R23 and N41. The disordered stretch occupies residues 91-120; it reads YANFHIKPDPHENRPVHEGLGSSSSHHDSN. Residues 96-107 show a composition bias toward basic and acidic residues; the sequence is IKPDPHENRPVH.

This sequence belongs to the acylphosphatase family.

The protein localises to the cytoplasm. The enzyme catalyses an acyl phosphate + H2O = a carboxylate + phosphate + H(+). The polypeptide is Acylphosphatase-1 (Acyp) (Drosophila melanogaster (Fruit fly)).